Consider the following 173-residue polypeptide: MTYFVLFLGLCFVLGGLAVASNPSPYYGVVGLVLASIAGCGWLLSLGVSFVSLVLFMVYLGGMLVVFVYSVSLAADPFPEAWGDWRVVGYGVSLITVLVVGVVVGGFVEYWDFGVITVDSVGMFSVRLDFGGVAMFYSCGVGMFLVAGWGLLLTLFVVLELVRGLTRGAIRAV.

6 helical membrane passes run Met-1 to Ser-21, Tyr-27 to Gly-47, Val-48 to Val-68, Val-87 to Phe-107, Phe-113 to Val-133, and Cys-139 to Leu-159.

The protein belongs to the complex I subunit 6 family.

It localises to the mitochondrion membrane. It catalyses the reaction a ubiquinone + NADH + 5 H(+)(in) = a ubiquinol + NAD(+) + 4 H(+)(out). Core subunit of the mitochondrial membrane respiratory chain NADH dehydrogenase (Complex I) that is believed to belong to the minimal assembly required for catalysis. Complex I functions in the transfer of electrons from NADH to the respiratory chain. The immediate electron acceptor for the enzyme is believed to be ubiquinone. This Alle alle (Dovekie) protein is NADH-ubiquinone oxidoreductase chain 6 (MT-ND6).